A 211-amino-acid chain; its full sequence is Small ribosomal subunit protein uS5 (211 aa).

The S5 DRBM domain maps to 50-113; sequence LEDEVLDINM…DNAKINITRI (64 aa).

The protein belongs to the universal ribosomal protein uS5 family. As to quaternary structure, part of the 30S ribosomal subunit. Contacts protein S4.

With S4 and S12 plays an important role in translational accuracy. The sequence is that of Small ribosomal subunit protein uS5 from Methanococcoides burtonii (strain DSM 6242 / NBRC 107633 / OCM 468 / ACE-M).